Here is a 322-residue protein sequence, read N- to C-terminus: Chemokine XC receptor 1 (322 aa).

Topologically, residues 1–27 (MESSTAFYDYHDKLSLLCENNVIFFST) are extracellular. A helical membrane pass occupies residues 28–55 (ISTIVLYSLVFLLSLVGNSLVLWVLVKY). The Cytoplasmic portion of the chain corresponds to 56–65 (ENLESLTNIF). Residues 66–85 (ILNLCLSDLMFSCLLPVLIS) form a helical membrane-spanning segment. Residues 86 to 98 (AQWSWFLGDFFCK) are Extracellular-facing. Cys-97 and Cys-170 are joined by a disulfide. The helical transmembrane segment at 99 to 120 (FFNMIFGISLYSSIFFLTIMTI) threads the bilayer. Topologically, residues 121-137 (HRYLSVVSPISTLGIHT) are cytoplasmic. Residues 138 to 162 (LRCRVLVTSCVWAASILFSIPDAVF) traverse the membrane as a helical segment. Over 163 to 185 (HKVISLNCKYSEHHGFLASVYQH) the chain is Extracellular. The helical transmembrane segment at 186–204 (NIFFLLSMGIILFCYVQIL) threads the bilayer. Over 205-220 (RTLFRTRSRQRHRTVR) the chain is Cytoplasmic. Residues 221-243 (LIFTVVVAYFLSWAPYNLTLFLK) form a helical membrane-spanning segment. Residues 244-259 (TGIIQQSCESLQQLDI) lie on the Extracellular side of the membrane. Residues 260–283 (AMIICRHLAFSHCCFNPVLYVFVG) traverse the membrane as a helical segment. Over 284–322 (IKFRRHLKHLFQQVWLCRKTSSTVPCSPGTFTYEGPSFY) the chain is Cytoplasmic.

Belongs to the G-protein coupled receptor 1 family. Expressed by dendritic cells from the thymus, slpeen, subcutaneous lymph nodes and mesenteric lymph nodes.

Its subcellular location is the cell membrane. Functionally, receptor for chemokines SCYC1 and SCYC2. Subsequently transduces a signal by increasing the intracellular calcium ions level. Receptor for XCL1/Lymphotactin. The protein is Chemokine XC receptor 1 (Xcr1) of Mus musculus (Mouse).